A 173-amino-acid chain; its full sequence is Crossover junction endodeoxyribonuclease RuvC (173 aa).

Catalysis depends on residues aspartate 8, glutamate 67, and aspartate 139. Aspartate 8, glutamate 67, and aspartate 139 together coordinate Mg(2+).

The protein belongs to the RuvC family. In terms of assembly, homodimer which binds Holliday junction (HJ) DNA. The HJ becomes 2-fold symmetrical on binding to RuvC with unstacked arms; it has a different conformation from HJ DNA in complex with RuvA. In the full resolvosome a probable DNA-RuvA(4)-RuvB(12)-RuvC(2) complex forms which resolves the HJ. Mg(2+) is required as a cofactor.

The protein localises to the cytoplasm. The enzyme catalyses Endonucleolytic cleavage at a junction such as a reciprocal single-stranded crossover between two homologous DNA duplexes (Holliday junction).. Its function is as follows. The RuvA-RuvB-RuvC complex processes Holliday junction (HJ) DNA during genetic recombination and DNA repair. Endonuclease that resolves HJ intermediates. Cleaves cruciform DNA by making single-stranded nicks across the HJ at symmetrical positions within the homologous arms, yielding a 5'-phosphate and a 3'-hydroxyl group; requires a central core of homology in the junction. The consensus cleavage sequence is 5'-(A/T)TT(C/G)-3'. Cleavage occurs on the 3'-side of the TT dinucleotide at the point of strand exchange. HJ branch migration catalyzed by RuvA-RuvB allows RuvC to scan DNA until it finds its consensus sequence, where it cleaves and resolves the cruciform DNA. The sequence is that of Crossover junction endodeoxyribonuclease RuvC from Proteus mirabilis (strain HI4320).